An 884-amino-acid chain; its full sequence is Protein translocase subunit SecA (884 aa).

Residues glutamine 83, 101 to 105 (GEGKT), and aspartate 491 contribute to the ATP site.

It belongs to the SecA family.

Its subcellular location is the plastid. The protein resides in the chloroplast stroma. The protein localises to the chloroplast thylakoid membrane. The catalysed reaction is ATP + H2O + cellular proteinSide 1 = ADP + phosphate + cellular proteinSide 2.. Functionally, has a central role in coupling the hydrolysis of ATP to the transfer of proteins across the thylakoid membrane. This is Protein translocase subunit SecA from Porphyra purpurea (Red seaweed).